The sequence spans 243 residues: Proteasome subunit beta (243 aa).

A disordered region spans residues 1–40 (MRTPMNNDISGRPDSLNGDRSDVFSPELGEFPNADDRAND). A propeptide spans 1–49 (MRTPMNNDISGRPDSLNGDRSDVFSPELGEFPNADDRANDIGDMETKTG) (removed in mature form; by autocatalysis). Thr50 acts as the Nucleophile in catalysis.

It belongs to the peptidase T1B family. The 20S proteasome core is composed of 14 alpha and 14 beta subunits that assemble into four stacked heptameric rings, resulting in a barrel-shaped structure. The two inner rings, each composed of seven catalytic beta subunits, are sandwiched by two outer rings, each composed of seven alpha subunits. The catalytic chamber with the active sites is on the inside of the barrel. Has a gated structure, the ends of the cylinder being occluded by the N-termini of the alpha-subunits. Is capped at one or both ends by the proteasome regulatory ATPase, PAN.

The protein resides in the cytoplasm. The enzyme catalyses Cleavage of peptide bonds with very broad specificity.. The formation of the proteasomal ATPase PAN-20S proteasome complex, via the docking of the C-termini of PAN into the intersubunit pockets in the alpha-rings, triggers opening of the gate for substrate entry. Interconversion between the open-gate and close-gate conformations leads to a dynamic regulation of the 20S proteasome proteolysis activity. Component of the proteasome core, a large protease complex with broad specificity involved in protein degradation. In Haloquadratum walsbyi (strain DSM 16790 / HBSQ001), this protein is Proteasome subunit beta.